A 418-amino-acid chain; its full sequence is Serine hydroxymethyltransferase (418 aa).

(6S)-5,6,7,8-tetrahydrofolate is bound by residues Leu121 and 125 to 127 (GHL). Lys230 bears the N6-(pyridoxal phosphate)lysine mark. (6S)-5,6,7,8-tetrahydrofolate contacts are provided by residues Glu246 and 355–357 (SPF).

Belongs to the SHMT family. In terms of assembly, homodimer. It depends on pyridoxal 5'-phosphate as a cofactor.

It is found in the cytoplasm. It carries out the reaction (6R)-5,10-methylene-5,6,7,8-tetrahydrofolate + glycine + H2O = (6S)-5,6,7,8-tetrahydrofolate + L-serine. Its pathway is one-carbon metabolism; tetrahydrofolate interconversion. The protein operates within amino-acid biosynthesis; glycine biosynthesis; glycine from L-serine: step 1/1. Catalyzes the reversible interconversion of serine and glycine with tetrahydrofolate (THF) serving as the one-carbon carrier. This reaction serves as the major source of one-carbon groups required for the biosynthesis of purines, thymidylate, methionine, and other important biomolecules. Also exhibits THF-independent aldolase activity toward beta-hydroxyamino acids, producing glycine and aldehydes, via a retro-aldol mechanism. The polypeptide is Serine hydroxymethyltransferase (Streptococcus pneumoniae serotype 2 (strain D39 / NCTC 7466)).